A 116-amino-acid chain; its full sequence is Heme-degrading monooxygenase (116 aa).

The ABM domain occupies 2 to 92 (VIVTNTSKIT…EYILENKISF (91 aa)). Asn6 is a Fe cation binding site. His76 contributes to the heme binding site.

The protein belongs to the antibiotic biosynthesis monooxygenase family. Heme-degrading monooxygenase IsdG subfamily. Homodimer.

Its subcellular location is the cytoplasm. It catalyses the reaction heme b + 3 reduced [NADPH--hemoprotein reductase] + 3 O2 = biliverdin IXalpha + CO + Fe(2+) + 3 oxidized [NADPH--hemoprotein reductase] + 3 H2O + H(+). Its function is as follows. Allows bacterial pathogens to use the host heme as an iron source. Catalyzes the oxidative degradation of the heme macrocyclic porphyrin ring to the biliverdin in the presence of a suitable electron donor such as ascorbate or NADPH--cytochrome P450 reductase, with subsequent release of free iron. The sequence is that of Heme-degrading monooxygenase from Halalkalibacterium halodurans (strain ATCC BAA-125 / DSM 18197 / FERM 7344 / JCM 9153 / C-125) (Bacillus halodurans).